Consider the following 325-residue polypeptide: MDRVLVASYPINHLIRPHSFRIDYCWSTCFTSRLNSGKERQKLSSRWRWRSMASDSTDSSSSSSFAPSVESDPSDKTSASFCIIEGPETVQDFAKMELQEIQENIRSRRNKIFLHMEEVRRLRIQQRIKNAELGISKEERENELPNFPSFIPFLPPLSSENLKLYYVTCYSLIAGIILFGGLLAPTLELKLGLGGTSYEDFIRSVHLPMQLSQVDPIVASFSGGAVGVISALMVVEVNNVKQQEHKRCKYCLGTGYLACARCSNTGALVLIEPVSTLNGEHQPLSLPKTERCQNCSGSGKVMCPTCLCTGMAMASEHDPRIDPFD.

A chloroplast-targeting transit peptide spans 1–54; the sequence is MDRVLVASYPINHLIRPHSFRIDYCWSTCFTSRLNSGKERQKLSSRWRWRSMAS. Low complexity predominate over residues 53–71; sequence ASDSTDSSSSSSFAPSVES. A disordered region spans residues 53-77; that stretch reads ASDSTDSSSSSSFAPSVESDPSDKT. 2 helical membrane-spanning segments follow: residues 164–184 and 217–237; these read LYYV…GLLA and IVAS…VVEV. The tract at residues 226–317 is CR-type-like; that stretch reads VGVISALMVV…CTGMAMASEH (92 aa). One copy of the CXXCXGXG motif repeat lies at 248–255; the sequence is CKYCLGTG. One copy of the CXXCXXXG motif repeat lies at 259–266; that stretch reads CARCSNTG. One copy of the CXXCXGXG motif repeat lies at 292 to 299; it reads CQNCSGSG. A CXXCXXXG motif repeat occupies 303–310; that stretch reads CPTCLCTG.

This sequence belongs to the orange-like family.

The protein localises to the plastid. Its subcellular location is the chloroplast membrane. Functionally, involved in chloroplast differentiation in fruit flesh. The protein is Protein ORANGE-GREEN, chloroplastic of Cucumis melo (Muskmelon).